A 174-amino-acid chain; its full sequence is 3-hydroxydecanoyl-[acyl-carrier-protein] dehydratase (174 aa).

Residue His-71 is part of the active site.

It belongs to the thioester dehydratase family. FabA subfamily. Homodimer.

The protein resides in the cytoplasm. The catalysed reaction is a (3R)-hydroxyacyl-[ACP] = a (2E)-enoyl-[ACP] + H2O. It carries out the reaction (3R)-hydroxydecanoyl-[ACP] = (2E)-decenoyl-[ACP] + H2O. The enzyme catalyses (2E)-decenoyl-[ACP] = (3Z)-decenoyl-[ACP]. The protein operates within lipid metabolism; fatty acid biosynthesis. Its function is as follows. Necessary for the introduction of cis unsaturation into fatty acids. Catalyzes the dehydration of (3R)-3-hydroxydecanoyl-ACP to E-(2)-decenoyl-ACP and then its isomerization to Z-(3)-decenoyl-ACP. Can catalyze the dehydratase reaction for beta-hydroxyacyl-ACPs with saturated chain lengths up to 16:0, being most active on intermediate chain length. The chain is 3-hydroxydecanoyl-[acyl-carrier-protein] dehydratase from Nitrobacter winogradskyi (strain ATCC 25391 / DSM 10237 / CIP 104748 / NCIMB 11846 / Nb-255).